The chain runs to 507 residues: Rhomboid protease GluP (507 aa).

5 helical membrane passes run 179-199 (FTYL…INGG), 229-249 (IVLH…WSVG), 261-281 (FLLI…VFSP), 283-303 (PSAG…YVAL), and 312-332 (TIGT…FAVS). Catalysis depends on serine 288, which acts as the Nucleophile. Catalysis depends on histidine 339, which acts as the Charge relay system. Helical transmembrane passes span 340–360 (IGGL…KAGA) and 365–385 (LLSA…GLHS). TPR repeat units follow at residues 424-457 (ADLL…EPKD) and 458-491 (HASY…KPKE).

The protein belongs to the peptidase S54 family.

Its subcellular location is the cell membrane. The enzyme catalyses Cleaves type-1 transmembrane domains using a catalytic dyad composed of serine and histidine that are contributed by different transmembrane domains.. Its activity is regulated as follows. Inhibited by dichloroisocoumarin (DCI) and N-p-tosyl-L-phenylalanine chloromethyl ketone (TPCK), but not by other serine protease inhibitors such as sulfonyl fluoride PMSF and 4-(2-aminoethyl)benzenesulfonyl fluoride (AEBSF). Functionally, rhomboid-type serine protease that catalyzes intramembrane proteolysis. Important for normal cell division and sporulation. May act as a glucose exporter. This is Rhomboid protease GluP (gluP) from Bacillus subtilis (strain 168).